Here is a 625-residue protein sequence, read N- to C-terminus: MRLAASSLLLGAAASLLSSATALAVRSDNPGSSAGYFVRSLPGQPPGPLIKMHAGHIEVDHATNGNLFFWHFQNKHIANRQRTVIWLNGGPGCSSMDGALMEVGPYRLKDDHTLAENEGSWHEFANLLFVDQPVGTGFSYVNTDSYLTELTQMSDHFIKFLTKFFELFPEYESDDIYLSGESYAGQHIPYIADAILKRNADASIKWNVKGLLIGNGWIDPSNQYLSYLPFAYESGIVEKGSPIADQIEKQVAVCVKTIAEKGRHHVDLNQCEQILQDILAKTKHHKDGKEVCWNMYDVRLEDTYPSCGMNWPPDLSSLTPYLRRKDVLQALHVNPDKTAGWTECAGAVSSSFRALKSKPSVELLPDLLKEMPILLFSGNKDLICNHIGTEELIHNMEWNGGKGFELDGAPGTWAPREDWVFEDEPAGIYQSARNLTYVLIYNSSHMVPFDFSRRTRDMLDRFMEVDIGKIGGTPADSVIGGEKAPITSVGGTPNSTAAVEKEKERVDQARWAAYYRSGEVALVLVASAAAIWGIFIWRQRHRRRGRRGSYAGLGGLKMTGGSRDRLADGRESFDEDELRDLTVASPMFERDRDLEAAEARRYSLGGVSDDESDDEGRIEKRPSVG.

Positions 1-24 (MRLAASSLLLGAAASLLSSATALA) are cleaved as a signal peptide. At 25–516 (VRSDNPGSSA…DQARWAAYYR (492 aa)) the chain is on the lumenal side. Active-site residues include S182 and D381. N434 and N442 each carry an N-linked (GlcNAc...) asparagine glycan. H445 is a catalytic residue. An N-linked (GlcNAc...) asparagine glycan is attached at N494. Residues 517–537 (SGEVALVLVASAAAIWGIFIW) traverse the membrane as a helical segment. Topologically, residues 538 to 625 (RQRHRRRGRR…GRIEKRPSVG (88 aa)) are cytoplasmic. A disordered region spans residues 601 to 625 (RYSLGGVSDDESDDEGRIEKRPSVG). The span at 615 to 625 (EGRIEKRPSVG) shows a compositional bias: basic and acidic residues.

The protein belongs to the peptidase S10 family.

The protein resides in the golgi apparatus. It is found in the trans-Golgi network membrane. It carries out the reaction Preferential release of a C-terminal arginine or lysine residue.. In terms of biological role, protease with a carboxypeptidase B-like function involved in the C-terminal processing of the lysine and arginine residues from protein precursors. Promotes cell fusion and is involved in the programmed cell death. This chain is Pheromone-processing carboxypeptidase KEX1 (KEX1), found in Tuber melanosporum (strain Mel28) (Perigord black truffle).